Reading from the N-terminus, the 357-residue chain is MSSVLTDLLNLDLSDVTEKVIAEYIWIGGSGMDMRSKARSLSGPVSSVKELPKWNYDGSSTGQAQGHDSEVILYPQAIFRDPFRRGKHILVICDAYSPNGTAIPSNKRAAAAKIFNEKAVSDEETWYGLEQEYTLLQKDVKWPLGWPIGGYPGPQGPYYCGVGADKAWGRDIVDAHYKACLYSGINISGINGEVMPGQWEFQVGPSVGISAADELWCARFIMERITEKAGVVLSFDPKPIEGDWNGAGCHTNYSTKSMRKEGGFEVIKKAIEKLKLRHKEHISAYGEGNERRLTGRHETADMNTFSWGVANRGASVRVGRDTEKEGKGYFEDRRPASNMDPYIVTSMIAETTILWKP.

In terms of domain architecture, GS beta-grasp spans 20-100; sequence VIAEYIWIGG…VICDAYSPNG (81 aa). Residues 107 to 357 form the GS catalytic domain; it reads KRAAAAKIFN…IAETTILWKP (251 aa).

Belongs to the glutamine synthetase family. As to quaternary structure, homooctamer.

Its subcellular location is the cytoplasm. The enzyme catalyses L-glutamate + NH4(+) + ATP = L-glutamine + ADP + phosphate + H(+). The protein is Glutamine synthetase cytosolic isozyme of Pinus sylvestris (Scotch pine).